A 182-amino-acid chain; its full sequence is Transcription termination/antitermination protein NusG (182 aa).

The 33-residue stretch at 131–163 (VGEQVRIKSGPFANQVGEVQEIETDKFKLTVLV) folds into the KOW domain.

This sequence belongs to the NusG family.

Its function is as follows. Participates in transcription elongation, termination and antitermination. The polypeptide is Transcription termination/antitermination protein NusG (Staphylococcus aureus (strain NCTC 8325 / PS 47)).